Consider the following 381-residue polypeptide: Mannitol-1-phosphate 5-dehydrogenase (381 aa).

3–14 provides a ligand contact to NAD(+); that stretch reads TLHFGAGNIGRG.

The protein belongs to the mannitol dehydrogenase family.

It catalyses the reaction D-mannitol 1-phosphate + NAD(+) = beta-D-fructose 6-phosphate + NADH + H(+). This is Mannitol-1-phosphate 5-dehydrogenase from Aeromonas salmonicida (strain A449).